Here is an 874-residue protein sequence, read N- to C-terminus: Alanine--tRNA ligase (874 aa).

Zn(2+) is bound by residues His-562, His-566, Cys-665, and His-669.

The protein belongs to the class-II aminoacyl-tRNA synthetase family. Zn(2+) serves as cofactor.

It is found in the cytoplasm. The catalysed reaction is tRNA(Ala) + L-alanine + ATP = L-alanyl-tRNA(Ala) + AMP + diphosphate. Functionally, catalyzes the attachment of alanine to tRNA(Ala) in a two-step reaction: alanine is first activated by ATP to form Ala-AMP and then transferred to the acceptor end of tRNA(Ala). Also edits incorrectly charged Ser-tRNA(Ala) and Gly-tRNA(Ala) via its editing domain. This chain is Alanine--tRNA ligase, found in Pseudomonas syringae pv. tomato (strain ATCC BAA-871 / DC3000).